The sequence spans 365 residues: MIQTTVLHPKHLEAGAKMVDFHGWEMPINYGSQLEEHHAVRTDAGMFDVSHMTIVDLTGERVKAFLQHLLANDVAKLTVPGKALYSGMLNPDGGVIDDLITYYLTDTFYRLVVNSATREKDLAWIRHHAIDFAVSVTERPELAMIAVQGPNAKAKAAKVFTPEQNAAVEGMKPFFGVQAGDLFIATTGYTGEDGYEIVVPQEKACDLWQALLDNGVAPCGLGARDTLRLEAGMNLYSQDMDESISPLAANMAWTLAFEPASRQFIGRAALEAQKAAGTQLKQVGLVMEEKGVLRAGMPVTFTTASGEKREGVITSGSFSPTLGYSIALARVPRDIGEQAEVEIRKKLVTVKVTKPAFVRNGQKLV.

This sequence belongs to the GcvT family. In terms of assembly, the glycine cleavage system is composed of four proteins: P, T, L and H.

It carries out the reaction N(6)-[(R)-S(8)-aminomethyldihydrolipoyl]-L-lysyl-[protein] + (6S)-5,6,7,8-tetrahydrofolate = N(6)-[(R)-dihydrolipoyl]-L-lysyl-[protein] + (6R)-5,10-methylene-5,6,7,8-tetrahydrofolate + NH4(+). The glycine cleavage system catalyzes the degradation of glycine. This Aeromonas salmonicida (strain A449) protein is Aminomethyltransferase.